The primary structure comprises 161 residues: Nucleotide-binding protein SAR11_0692 (161 aa).

It belongs to the YajQ family.

In terms of biological role, nucleotide-binding protein. The chain is Nucleotide-binding protein SAR11_0692 from Pelagibacter ubique (strain HTCC1062).